The primary structure comprises 64 residues: DNA gyrase inhibitor YacG (64 aa).

4 residues coordinate Zn(2+): C9, C12, C28, and C32. Residues 45 to 64 (KRIPSSGDLSESDDWSEEQK) form a disordered region. The segment covering 54 to 64 (SESDDWSEEQK) has biased composition (acidic residues).

The protein belongs to the DNA gyrase inhibitor YacG family. As to quaternary structure, interacts with GyrB. It depends on Zn(2+) as a cofactor.

In terms of biological role, inhibits all the catalytic activities of DNA gyrase by preventing its interaction with DNA. Acts by binding directly to the C-terminal domain of GyrB, which probably disrupts DNA binding by the gyrase. The chain is DNA gyrase inhibitor YacG from Citrobacter koseri (strain ATCC BAA-895 / CDC 4225-83 / SGSC4696).